Reading from the N-terminus, the 395-residue chain is Immunoglobulin heavy constant gamma 2 (395 aa).

Residues 1-98 (ASTKGPSVFP…PSNTKVDKTV (98 aa)) are CH1. Topologically, residues 1–346 (ASTKGPSVFP…DGELDGLWTT (346 aa)) are extracellular. Ig-like domains lie at 6–99 (PSVF…KTVE), 117–216 (PSVF…KTIS), and 225–321 (PQVY…KSLS). Cysteine 27 and cysteine 83 form a disulfide bridge. The segment at 99–110 (ERKCCVECPPCP) is hinge. The segment at 111–219 (APPVAGPSVF…PIEKTISKTK (109 aa)) is CH2. Intrachain disulfides connect cysteine 140–cysteine 200 and cysteine 246–cysteine 304. A glycan (N-linked (GlcNAc...) (complex) asparagine) is linked at asparagine 176. Residues 220–326 (GQPREPQVYT…QKSLSLSPEL (107 aa)) are CH3. Residues 347 to 367 (ITIFITLFLLSVCYSATITFF) form a helical membrane-spanning segment. The Cytoplasmic portion of the chain corresponds to 368-395 (KVKWIFSSVVDLKQTIVPDYRNMIRQGA).

Immunoglobulins are composed of two identical heavy chains and two identical light chains; disulfide-linked. Glycosylation on Asn-176 is required for interaction with Fc receptors and ability to activate the complement pathway. Post-translationally, (Microbial infection) Deglycosylation on Asn-176 by S.pyogenes EndoS or Endos2 endoglucosidases prevents interaction between immunoglobulin-gamma (IgG) and Fc receptors, impairing ability to activate the complement pathway.

The protein resides in the secreted. The protein localises to the cell membrane. Functionally, constant region of immunoglobulin heavy chains. Immunoglobulins, also known as antibodies, are membrane-bound or secreted glycoproteins produced by B lymphocytes. In the recognition phase of humoral immunity, the membrane-bound immunoglobulins serve as receptors which, upon binding of a specific antigen, trigger the clonal expansion and differentiation of B lymphocytes into immunoglobulins-secreting plasma cells. Secreted immunoglobulins mediate the effector phase of humoral immunity, which results in the elimination of bound antigens. The antigen binding site is formed by the variable domain of one heavy chain, together with that of its associated light chain. Thus, each immunoglobulin has two antigen binding sites with remarkable affinity for a particular antigen. The variable domains are assembled by a process called V-(D)-J rearrangement and can then be subjected to somatic hypermutations which, after exposure to antigen and selection, allow affinity maturation for a particular antigen. In Homo sapiens (Human), this protein is Immunoglobulin heavy constant gamma 2.